The following is a 25-amino-acid chain: C-type natriuretic peptide (25 aa).

A disulfide bridge connects residues Cys-9 and Cys-25.

In terms of tissue distribution, venom gland.

It is found in the secreted. In terms of biological role, snake venom natriuretic peptide that has a vasorelaxant activity in rat aortic strips and a diuretic potency in anesthetized rats. May act by activating natriuretic receptors (NPR1 and/or NPR2). This Crotalus atrox (Western diamondback rattlesnake) protein is C-type natriuretic peptide.